Reading from the N-terminus, the 192-residue chain is Ion-translocating oxidoreductase complex subunit A (192 aa).

The next 6 helical transmembrane spans lie at Ile5–Leu25, Val39–Val59, Ile63–Val83, Leu102–Leu122, Val134–Leu154, and Ser171–Val191.

Belongs to the NqrDE/RnfAE family. The complex is composed of six subunits: RnfA, RnfB, RnfC, RnfD, RnfE and RnfG.

It is found in the cell inner membrane. In terms of biological role, part of a membrane-bound complex that couples electron transfer with translocation of ions across the membrane. The protein is Ion-translocating oxidoreductase complex subunit A of Haemophilus influenzae (strain ATCC 51907 / DSM 11121 / KW20 / Rd).